Here is a 1018-residue protein sequence, read N- to C-terminus: Pikachurin (1018 aa).

A signal peptide spans 1-23 (MDLIRGVLLRLLLLASSLGPGAA). 2 Fibronectin type-III domains span residues 37–145 (PPLD…TLPQ) and 153–248 (APQQ…TARP). Asn47 carries N-linked (GlcNAc...) asparagine glycosylation. The tract at residues 228 to 274 (VNPHGSSPRSQPSSTIRTARPEESGSGRYGPHYATDTEAGEDDDTFE) is disordered. Over residues 231–244 (HGSSPRSQPSSTIR) the composition is skewed to polar residues. The span at 265-274 (EAGEDDDTFE) shows a compositional bias: acidic residues. Residues 352–390 (FDTSCDETVCSADSFCVSDYTWGGSRCHCNLGKGGESCS) form the EGF-like 1 domain. Disulfide bonds link Cys356/Cys367, Cys361/Cys378, Cys380/Cys389, Cys543/Cys573, Cys578/Cys589, Cys583/Cys599, Cys601/Cys610, Cys797/Cys808, Cys802/Cys817, Cys819/Cys828, and Cys988/Cys1015. Residues 395–573 (IQYPQFFGHS…ALSGADVGEC (179 aa)) enclose the Laminin G-like 1 domain. 2 EGF-like domains span residues 574-611 (SSGI…RHCE) and 793-829 (AAHP…LHCQ). One can recognise a Laminin G-like 2 domain in the interval 618–797 (IPQFKESLRS…VNVENAAHPC (180 aa)). The Laminin G-like 3 domain occupies 836-1015 (IEIPQFIGRS…AVDGKNINTC (180 aa)).

As to quaternary structure, interacts with DAG1 alpha-dystroglycan. Interacts with GPR158 and GPR179; transsynaptic interaction is required for synaptic organization of photoreceptor cells. O-glycosylated; contains chondroitin sulfate and heparan sulfate.

The protein resides in the secreted. It is found in the extracellular space. Its subcellular location is the extracellular matrix. It localises to the synaptic cleft. The protein localises to the presynaptic active zone. Functionally, involved in both the retinal photoreceptor ribbon synapse formation and physiological functions of visual perception. Plays a key role in the synaptic organization of photoreceptors by mediating transsynaptic interaction between alpha-dystroglycan and GPR179 on the postsynaptic membrane. Necessary for proper bipolar dendritic tip apposition to the photoreceptor ribbon synapse. Promotes matrix assembly and cell adhesiveness. The polypeptide is Pikachurin (EGFLAM) (Bos taurus (Bovine)).